The primary structure comprises 162 residues: Disulfide bond formation protein B (162 aa).

Topologically, residues 1–8 (MTPLFRKA) are cytoplasmic. Residues 9-25 (VWLLFAVSVCAFAGSLA) form a helical membrane-spanning segment. Residues 26 to 43 (AQYVLGMEPCVLCISQRL) are Periplasmic-facing. A disulfide bridge connects residues Cys35 and Cys38. Residues 44–60 (CVLATALCTAIVLMCRP) form a helical membrane-spanning segment. Topologically, residues 61–67 (RRRAGGL) are cytoplasmic. The chain crosses the membrane as a helical span at residues 68 to 85 (FGAVFISIPAVTGISVAA). Topologically, residues 86 to 141 (YQLWLQSLPPGTAPSCGAPWTFRLKGWSLFDWFEPVVRGFGNCAEPDYLLGVALPV) are periplasmic. Cys101 and Cys128 form a disulfide bridge. Residues 142–160 (WSAAYFLAVVLTVWWAWAR) traverse the membrane as a helical segment. The Cytoplasmic portion of the chain corresponds to 161 to 162 (AK).

Belongs to the DsbB family.

Its subcellular location is the cell inner membrane. Required for disulfide bond formation in some periplasmic proteins. Acts by oxidizing the DsbA protein. The chain is Disulfide bond formation protein B from Neisseria meningitidis serogroup C / serotype 2a (strain ATCC 700532 / DSM 15464 / FAM18).